The primary structure comprises 186 residues: Elongation factor P (186 aa).

It belongs to the elongation factor P family.

The protein resides in the cytoplasm. Its pathway is protein biosynthesis; polypeptide chain elongation. Functionally, involved in peptide bond synthesis. Stimulates efficient translation and peptide-bond synthesis on native or reconstituted 70S ribosomes in vitro. Probably functions indirectly by altering the affinity of the ribosome for aminoacyl-tRNA, thus increasing their reactivity as acceptors for peptidyl transferase. In Shewanella halifaxensis (strain HAW-EB4), this protein is Elongation factor P.